The following is a 1103-amino-acid chain: Isoleucine--tRNA ligase (1103 aa).

Residues 53–63 (PFANGLPHYGH) carry the 'HIGH' region motif. The 'KMSKS' region signature appears at 628-632 (KLSKR). Lys631 contributes to the ATP binding site.

It belongs to the class-I aminoacyl-tRNA synthetase family. IleS type 2 subfamily. In terms of assembly, monomer. Zn(2+) serves as cofactor.

The protein localises to the cytoplasm. It carries out the reaction tRNA(Ile) + L-isoleucine + ATP = L-isoleucyl-tRNA(Ile) + AMP + diphosphate. Catalyzes the attachment of isoleucine to tRNA(Ile). As IleRS can inadvertently accommodate and process structurally similar amino acids such as valine, to avoid such errors it has two additional distinct tRNA(Ile)-dependent editing activities. One activity is designated as 'pretransfer' editing and involves the hydrolysis of activated Val-AMP. The other activity is designated 'posttransfer' editing and involves deacylation of mischarged Val-tRNA(Ile). This chain is Isoleucine--tRNA ligase, found in Rickettsia akari (strain Hartford).